The following is a 93-amino-acid chain: MPRSLKKGPFVDDHLLKKVDVQNEKNTKQVIKTWSRRSTIIPDFIGHTFAVHDGRKHVPVFVTEAMVGHKLGEFAPTRTFKGHIKDDRKSKRR.

Belongs to the universal ribosomal protein uS19 family.

Protein S19 forms a complex with S13 that binds strongly to the 16S ribosomal RNA. This chain is Small ribosomal subunit protein uS19, found in Mycolicibacterium smegmatis (strain ATCC 700084 / mc(2)155) (Mycobacterium smegmatis).